A 224-amino-acid polypeptide reads, in one-letter code: Flagellar L-ring protein (224 aa).

An N-terminal signal peptide occupies residues 1–15 (MARYFILAVALLLTA). Cys-16 carries N-palmitoyl cysteine lipidation. Residue Cys-16 is the site of S-diacylglycerol cysteine attachment.

Belongs to the FlgH family. In terms of assembly, the basal body constitutes a major portion of the flagellar organelle and consists of four rings (L,P,S, and M) mounted on a central rod.

The protein localises to the cell outer membrane. The protein resides in the bacterial flagellum basal body. Assembles around the rod to form the L-ring and probably protects the motor/basal body from shearing forces during rotation. In Shewanella sp. (strain MR-7), this protein is Flagellar L-ring protein.